The primary structure comprises 454 residues: Protein odr-4 homolog (454 aa).

2 helical membrane passes run 82-102 and 432-452; these read MLPG…ELAN and IGVI…FHYF.

This sequence belongs to the ODR-4 family.

It is found in the membrane. May play a role in the trafficking of a subset of G-protein coupled receptors. The polypeptide is Protein odr-4 homolog (ODR4) (Pongo abelii (Sumatran orangutan)).